The following is a 274-amino-acid chain: 2-succinyl-6-hydroxy-2,4-cyclohexadiene-1-carboxylate synthase (274 aa).

Belongs to the AB hydrolase superfamily. MenH family. In terms of assembly, monomer.

It carries out the reaction 5-enolpyruvoyl-6-hydroxy-2-succinyl-cyclohex-3-ene-1-carboxylate = (1R,6R)-6-hydroxy-2-succinyl-cyclohexa-2,4-diene-1-carboxylate + pyruvate. Its pathway is quinol/quinone metabolism; 1,4-dihydroxy-2-naphthoate biosynthesis; 1,4-dihydroxy-2-naphthoate from chorismate: step 3/7. The protein operates within quinol/quinone metabolism; menaquinone biosynthesis. Catalyzes a proton abstraction reaction that results in 2,5-elimination of pyruvate from 2-succinyl-5-enolpyruvyl-6-hydroxy-3-cyclohexene-1-carboxylate (SEPHCHC) and the formation of 2-succinyl-6-hydroxy-2,4-cyclohexadiene-1-carboxylate (SHCHC). This is 2-succinyl-6-hydroxy-2,4-cyclohexadiene-1-carboxylate synthase from Yersinia enterocolitica serotype O:8 / biotype 1B (strain NCTC 13174 / 8081).